The sequence spans 193 residues: dCTP deaminase, dUMP-forming (193 aa).

DCTP contacts are provided by residues 101 to 106, D119, 127 to 129, Q148, Y162, and Q174; these read KSSLGR and TLE. E129 acts as the Proton donor/acceptor in catalysis. Positions 160 to 193 are disordered; sequence TPYGSGSLGSKYQGQRGPTPSKGYLNFSSEQDSD. The span at 167–177 shows a compositional bias: polar residues; sequence LGSKYQGQRGP.

It belongs to the dCTP deaminase family. Homotrimer.

The enzyme catalyses dCTP + 2 H2O = dUMP + NH4(+) + diphosphate. It functions in the pathway pyrimidine metabolism; dUMP biosynthesis; dUMP from dCTP: step 1/1. In terms of biological role, bifunctional enzyme that catalyzes both the deamination of dCTP to dUTP and the hydrolysis of dUTP to dUMP without releasing the toxic dUTP intermediate. The sequence is that of dCTP deaminase, dUMP-forming from Corynebacterium efficiens (strain DSM 44549 / YS-314 / AJ 12310 / JCM 11189 / NBRC 100395).